The sequence spans 1060 residues: Carbamoyl phosphate synthase large chain (1060 aa).

Residues 1–400 are carboxyphosphate synthetic domain; sequence MPRDESINKV…SLNKAIRSLD (400 aa). Positions 127, 167, 173, 174, 206, 208, 213, 240, 241, 242, 283, and 297 each coordinate ATP. The ATP-grasp 1 domain maps to 131 to 326; that stretch reads DSFMKKLNEP…IAKIAAKIAV (196 aa). Residues Gln283, Glu297, and Asn299 each contribute to the Mg(2+) site. Mn(2+) contacts are provided by Gln283, Glu297, and Asn299. Positions 401 to 539 are oligomerization domain; it reads IGADGFTETP…YGCYDLEDEV (139 aa). Residues 540 to 926 form a carbamoyl phosphate synthetic domain region; the sequence is EVSDRRKVLI…YKSQLSASMD (387 aa). The ATP-grasp 2 domain maps to 664–858; the sequence is TEVLNKLGIP…LAKMAARLMM (195 aa). Residues Arg700, Lys739, Leu741, Glu746, Gly771, Val772, His773, Ser774, Gln814, and Glu829 each coordinate ATP. Positions 814, 829, and 831 each coordinate Mg(2+). Residues Gln814, Glu829, and Asn831 each contribute to the Mn(2+) site. The region spanning 925–1060 is the MGS-like domain; the sequence is MDLLNEGKVF…VKSLDEYHGM (136 aa). Residues 927-1060 form an allosteric domain region; it reads LLNEGKVFIS…VKSLDEYHGM (134 aa).

This sequence belongs to the CarB family. In terms of assembly, composed of two chains; the small (or glutamine) chain promotes the hydrolysis of glutamine to ammonia, which is used by the large (or ammonia) chain to synthesize carbamoyl phosphate. Tetramer of heterodimers (alpha,beta)4. Requires Mg(2+) as cofactor. Mn(2+) is required as a cofactor.

The catalysed reaction is hydrogencarbonate + L-glutamine + 2 ATP + H2O = carbamoyl phosphate + L-glutamate + 2 ADP + phosphate + 2 H(+). It catalyses the reaction hydrogencarbonate + NH4(+) + 2 ATP = carbamoyl phosphate + 2 ADP + phosphate + 2 H(+). The protein operates within amino-acid biosynthesis; L-arginine biosynthesis; carbamoyl phosphate from bicarbonate: step 1/1. It participates in pyrimidine metabolism; UMP biosynthesis via de novo pathway; (S)-dihydroorotate from bicarbonate: step 1/3. Functionally, large subunit of the glutamine-dependent carbamoyl phosphate synthetase (CPSase). CPSase catalyzes the formation of carbamoyl phosphate from the ammonia moiety of glutamine, carbonate, and phosphate donated by ATP, constituting the first step of 2 biosynthetic pathways, one leading to arginine and/or urea and the other to pyrimidine nucleotides. The large subunit (synthetase) binds the substrates ammonia (free or transferred from glutamine from the small subunit), hydrogencarbonate and ATP and carries out an ATP-coupled ligase reaction, activating hydrogencarbonate by forming carboxy phosphate which reacts with ammonia to form carbamoyl phosphate. The protein is Carbamoyl phosphate synthase large chain of Methanothermobacter thermautotrophicus (strain ATCC 29096 / DSM 1053 / JCM 10044 / NBRC 100330 / Delta H) (Methanobacterium thermoautotrophicum).